A 219-amino-acid chain; its full sequence is uncharacterized protein (219 aa).

Basic residues predominate over residues Pro139 to Ser154. The segment at Pro139–Thr160 is disordered. The 59-residue stretch at Lys159–Ile217 folds into the LysM domain.

This is an uncharacterized protein from Bacillus subtilis (strain 168).